We begin with the raw amino-acid sequence, 435 residues long: Tol-Pal system protein TolB (435 aa).

An N-terminal signal peptide occupies residues 1-20 (MRKIIAGVFIFVFLISNLYA).

This sequence belongs to the TolB family. The Tol-Pal system is composed of five core proteins: the inner membrane proteins TolA, TolQ and TolR, the periplasmic protein TolB and the outer membrane protein Pal. They form a network linking the inner and outer membranes and the peptidoglycan layer.

It localises to the periplasm. Functionally, part of the Tol-Pal system, which plays a role in outer membrane invagination during cell division and is important for maintaining outer membrane integrity. This is Tol-Pal system protein TolB from Francisella tularensis subsp. holarctica (strain LVS).